A 667-amino-acid chain; its full sequence is UvrABC system protein B (667 aa).

The 156-residue stretch at 25–180 folds into the Helicase ATP-binding domain; that stretch reads DSLQNQHRFQ…LLRALVSVQY (156 aa). 38-45 is an ATP binding site; it reads GATGTGKT. A Beta-hairpin motif is present at residues 91–114; sequence YYDYYQPEAYIPVSDTYIEKSSSI. In terms of domain architecture, Helicase C-terminal spans 429–595; that stretch reads QVDDLLGEIK…PIVKRSSNSI (167 aa). The 36-residue stretch at 626–661 folds into the UVR domain; that stretch reads PELIQQLEAQMKEAAKNLEFESAAKYRDRIKQLRDK.

This sequence belongs to the UvrB family. As to quaternary structure, forms a heterotetramer with UvrA during the search for lesions. Interacts with UvrC in an incision complex.

The protein localises to the cytoplasm. Its function is as follows. The UvrABC repair system catalyzes the recognition and processing of DNA lesions. A damage recognition complex composed of 2 UvrA and 2 UvrB subunits scans DNA for abnormalities. Upon binding of the UvrA(2)B(2) complex to a putative damaged site, the DNA wraps around one UvrB monomer. DNA wrap is dependent on ATP binding by UvrB and probably causes local melting of the DNA helix, facilitating insertion of UvrB beta-hairpin between the DNA strands. Then UvrB probes one DNA strand for the presence of a lesion. If a lesion is found the UvrA subunits dissociate and the UvrB-DNA preincision complex is formed. This complex is subsequently bound by UvrC and the second UvrB is released. If no lesion is found, the DNA wraps around the other UvrB subunit that will check the other stand for damage. This is UvrABC system protein B from Microcystis aeruginosa (strain NIES-843 / IAM M-2473).